Reading from the N-terminus, the 312-residue chain is Methionyl-tRNA formyltransferase (312 aa).

109 to 112 provides a ligand contact to (6S)-5,6,7,8-tetrahydrofolate; it reads SLLP.

This sequence belongs to the Fmt family.

It catalyses the reaction L-methionyl-tRNA(fMet) + (6R)-10-formyltetrahydrofolate = N-formyl-L-methionyl-tRNA(fMet) + (6S)-5,6,7,8-tetrahydrofolate + H(+). Attaches a formyl group to the free amino group of methionyl-tRNA(fMet). The formyl group appears to play a dual role in the initiator identity of N-formylmethionyl-tRNA by promoting its recognition by IF2 and preventing the misappropriation of this tRNA by the elongation apparatus. The sequence is that of Methionyl-tRNA formyltransferase from Listeria innocua serovar 6a (strain ATCC BAA-680 / CLIP 11262).